Here is a 214-residue protein sequence, read N- to C-terminus: Redox-sensing transcriptional repressor Rex (214 aa).

The H-T-H motif DNA-binding region spans 17–56 (LYYRIFKRFHADQVEKASSKQIADAMGIDSATVRRDFSYF). 91-96 (GCGNIG) contacts NAD(+).

This sequence belongs to the transcriptional regulatory Rex family. Homodimer.

Its subcellular location is the cytoplasm. In terms of biological role, modulates transcription in response to changes in cellular NADH/NAD(+) redox state. This chain is Redox-sensing transcriptional repressor Rex, found in Streptococcus pyogenes serotype M12 (strain MGAS9429).